The following is a 282-amino-acid chain: Acetylglutamate kinase (282 aa).

Residues 62-63 (GG), Arg84, and Asn178 contribute to the substrate site. L-arginine is bound by residues Lys196, Ser214, and 266–269 (EIFS).

As to quaternary structure, homohexamer.

The protein resides in the cytoplasm. The enzyme catalyses N-acetyl-L-glutamate + ATP = N-acetyl-L-glutamyl 5-phosphate + ADP. It functions in the pathway amino-acid biosynthesis; L-arginine biosynthesis; N(2)-acetyl-L-ornithine from L-glutamate: step 2/4. Allosterically inhibited by arginine. In terms of biological role, catalyzes the ATP-dependent phosphorylation of N-acetyl-L-glutamate. The sequence is that of Acetylglutamate kinase from Thermotoga maritima (strain ATCC 43589 / DSM 3109 / JCM 10099 / NBRC 100826 / MSB8).